A 216-amino-acid polypeptide reads, in one-letter code: Superoxide dismutase [Cu-Zn], chloroplastic (216 aa).

The transit peptide at methionine 1–alanine 62 directs the protein to the chloroplast. Cu cation is bound by residues histidine 108, histidine 110, and histidine 125. Cysteine 119 and cysteine 208 are joined by a disulfide. Zn(2+) contacts are provided by histidine 125, histidine 133, histidine 142, and aspartate 145. Histidine 182 lines the Cu cation pocket.

It belongs to the Cu-Zn superoxide dismutase family. As to quaternary structure, homotetramer. It depends on Cu cation as a cofactor. Zn(2+) serves as cofactor.

Its subcellular location is the plastid. It is found in the chloroplast. The enzyme catalyses 2 superoxide + 2 H(+) = H2O2 + O2. Destroys radicals which are normally produced within the cells and which are toxic to biological systems. The polypeptide is Superoxide dismutase [Cu-Zn], chloroplastic (SODCP) (Zantedeschia aethiopica (White calla lily)).